Consider the following 270-residue polypeptide: Bis(5'-nucleosyl)-tetraphosphatase, symmetrical (270 aa).

Belongs to the Ap4A hydrolase family.

The enzyme catalyses P(1),P(4)-bis(5'-adenosyl) tetraphosphate + H2O = 2 ADP + 2 H(+). Hydrolyzes diadenosine 5',5'''-P1,P4-tetraphosphate to yield ADP. In Cellvibrio japonicus (strain Ueda107) (Pseudomonas fluorescens subsp. cellulosa), this protein is Bis(5'-nucleosyl)-tetraphosphatase, symmetrical.